Reading from the N-terminus, the 372-residue chain is Aminomethyltransferase (372 aa).

This sequence belongs to the GcvT family. As to quaternary structure, the glycine cleavage system is composed of four proteins: P, T, L and H.

It carries out the reaction N(6)-[(R)-S(8)-aminomethyldihydrolipoyl]-L-lysyl-[protein] + (6S)-5,6,7,8-tetrahydrofolate = N(6)-[(R)-dihydrolipoyl]-L-lysyl-[protein] + (6R)-5,10-methylene-5,6,7,8-tetrahydrofolate + NH4(+). The glycine cleavage system catalyzes the degradation of glycine. The sequence is that of Aminomethyltransferase from Paraburkholderia phymatum (strain DSM 17167 / CIP 108236 / LMG 21445 / STM815) (Burkholderia phymatum).